The following is a 116-amino-acid chain: MWLQDRIATFFFPKGMMLTTAALMLFFLHLGIFIRDVHNFCITYHYDHMSFHYTVVLMFSQVISICWAAMGSLYAEMTENKYVCFSALTILMLNGAMFFNRLSLEFLAIEYREEHH.

The Cytoplasmic segment spans residues 1–16; sequence MWLQDRIATFFFPKGM. A helical transmembrane segment spans residues 17 to 38; that stretch reads MLTTAALMLFFLHLGIFIRDVH. Residues 39–51 lie on the Extracellular side of the membrane; sequence NFCITYHYDHMSF. The helical transmembrane segment at 52 to 72 threads the bilayer; the sequence is HYTVVLMFSQVISICWAAMGS. The Cytoplasmic portion of the chain corresponds to 73–84; that stretch reads LYAEMTENKYVC. The chain crosses the membrane as a helical span at residues 85–107; sequence FSALTILMLNGAMFFNRLSLEFL. Over 108–116 the chain is Extracellular; it reads AIEYREEHH.

Component of the CatSper complex or CatSpermasome composed of the core pore-forming members CATSPER1, CATSPER2, CATSPER3 and CATSPER4 as well as auxiliary members CATSPERB, CATSPERG, CATSPERD, CATSPERE, CATSPERZ, C2CD6/CATSPERT, TMEM249, TMEM262 and EFCAB9. HSPA1 may be an additional auxiliary complex member. The core complex members CATSPER1, CATSPER2, CATSPER3 and CATSPER4 form a heterotetrameric channel. The auxiliary CATSPERB, CATSPERG, CATSPERD and CATSPERE subunits form a pavilion-like structure over the pore which stabilizes the complex through interactions with CATSPER4, CATSPER3, CATSPER1 and CATSPER2 respectively. TMEM262/CATSPERH interacts with CATSPERB, further stabilizing the complex. C2CD6/CATSPERT interacts at least with CATSPERD and is required for targeting the CatSper complex in the flagellar membrane.

It is found in the cell projection. The protein localises to the cilium. Its subcellular location is the flagellum membrane. In terms of biological role, auxiliary component of the CatSper complex, a complex involved in sperm cell hyperactivation. This is Cation channel sperm-associated auxiliary subunit TMEM262 from Homo sapiens (Human).